We begin with the raw amino-acid sequence, 588 residues long: UDP-N-acetylmuramate--L-alanine ligase (588 aa).

119 to 125 (GSHGKST) lines the ATP pocket. Positions 344–371 (VPAAAGAAAAPPVRRDPATAAAAATTAP) are enriched in low complexity. The segment at 344–411 (VPAAAGAAAA…APAAGPDHAA (68 aa)) is disordered. Pro residues predominate over residues 372-381 (IGPPDSPPPT). The span at 382–411 (GIALPRAAPPAVDAPVAATPAPAAGPDHAA) shows a compositional bias: low complexity.

Belongs to the MurCDEF family.

The protein localises to the cytoplasm. The enzyme catalyses UDP-N-acetyl-alpha-D-muramate + L-alanine + ATP = UDP-N-acetyl-alpha-D-muramoyl-L-alanine + ADP + phosphate + H(+). It functions in the pathway cell wall biogenesis; peptidoglycan biosynthesis. Cell wall formation. This Frankia alni (strain DSM 45986 / CECT 9034 / ACN14a) protein is UDP-N-acetylmuramate--L-alanine ligase.